We begin with the raw amino-acid sequence, 226 residues long: PKHD-type hydroxylase mma_3618 (226 aa).

Residues 78–178 form the Fe2OG dioxygenase domain; sequence RYMPPLFNRY…RISSFFWVQS (101 aa). Residues His-96, Asp-98, and His-159 each coordinate Fe cation. A 2-oxoglutarate-binding site is contributed by Arg-169.

Fe(2+) is required as a cofactor. The cofactor is L-ascorbate.

In Janthinobacterium sp. (strain Marseille) (Minibacterium massiliensis), this protein is PKHD-type hydroxylase mma_3618.